We begin with the raw amino-acid sequence, 686 residues long: Band 4.1-like protein 4A (686 aa).

Residues 11–299 (FYCEVLLLDE…EHHTFFRMPD (289 aa)) enclose the FERM domain. Ser304 bears the Phosphoserine mark. Composition is skewed to polar residues over residues 332 to 346 (DLSIQLPRPNQNVVR) and 357 to 382 (AQTQPTGSNNINRITANTENGENEGT). The segment at 332 to 669 (DLSIQLPRPN…LSTINPAGKP (338 aa)) is disordered. Residues Ser389, Ser393, and Ser402 each carry the phosphoserine modification. Polar residues-rich tracts occupy residues 418–428 (GPQSGLYNSSS) and 442–455 (RNLSCGSDNDSSQL). A compositionally biased stretch (low complexity) spans 479 to 489 (RCNTSSGSESE). 2 stretches are compositionally biased toward basic and acidic residues: residues 518 to 527 (VLRRQKEKNQ) and 547 to 561 (QAKEELWKHIQKELV). The span at 588–601 (IRHSHSPRSYRQYR) shows a compositional bias: basic residues. The segment covering 648 to 658 (GSKDSLIEEKS) has biased composition (basic and acidic residues).

In terms of tissue distribution, brain, heart, lung, liver and spleen. Not detected in thymus and kidney.

Its subcellular location is the cytoplasm. The protein localises to the cytoskeleton. The chain is Band 4.1-like protein 4A from Mus musculus (Mouse).